A 418-amino-acid polypeptide reads, in one-letter code: 1-acylglycerol-3-phosphate O-acyltransferase (418 aa).

The AB hydrolase-1 domain occupies 121–251 (PTLVMVHGYG…RATWKGAVLN (131 aa)). The short motif at 197–201 (GHSFG) is the GXSXG element. The HXXXXD motif motif lies at 379-384 (HFVFID).

Belongs to the peptidase S33 family. ABHD4/ABHD5 subfamily.

Its subcellular location is the cytoplasm. It carries out the reaction a 1-acyl-sn-glycero-3-phosphate + an acyl-CoA = a 1,2-diacyl-sn-glycero-3-phosphate + CoA. In terms of biological role, lysophosphatidic acid acyltransferase which functions in phosphatidic acid biosynthesis. Is highly specific for lysophosphatidic acid and able to use different acyl-CoA donors. May regulate neutral lipid accumulation and participate in the regulation of lipid turnover in vegetative cells. Possesses additional triacylglycerol lipase and phospholipase A2 activities in vitro. Is not active as esterase or lysophospholipase. This chain is 1-acylglycerol-3-phosphate O-acyltransferase, found in Arabidopsis thaliana (Mouse-ear cress).